Here is a 235-residue protein sequence, read N- to C-terminus: Purine nucleoside phosphorylase DeoD-type (235 aa).

Residue H4 coordinates a purine D-ribonucleoside. Phosphate-binding positions include G20, R24, R43, and 87-90 (RVGT). A purine D-ribonucleoside contacts are provided by residues 179–181 (EME) and 203–204 (SD). The Proton donor role is filled by D204.

The protein belongs to the PNP/UDP phosphorylase family. In terms of assembly, homohexamer; trimer of homodimers.

The enzyme catalyses a purine D-ribonucleoside + phosphate = a purine nucleobase + alpha-D-ribose 1-phosphate. The catalysed reaction is a purine 2'-deoxy-D-ribonucleoside + phosphate = a purine nucleobase + 2-deoxy-alpha-D-ribose 1-phosphate. Its function is as follows. Catalyzes the reversible phosphorolytic breakdown of the N-glycosidic bond in the beta-(deoxy)ribonucleoside molecules, with the formation of the corresponding free purine bases and pentose-1-phosphate. The protein is Purine nucleoside phosphorylase DeoD-type of Brevibacillus brevis (strain 47 / JCM 6285 / NBRC 100599).